A 78-amino-acid polypeptide reads, in one-letter code: MAQQQKKRRKRKVKKCKLCEMKVEYVDYKDLRLLNEFLTDKAKIIPKRVTGNCAKHQRMIKIAIKRARHMALLPFIKL.

Belongs to the bacterial ribosomal protein bS18 family. Part of the 30S ribosomal subunit. Forms a tight heterodimer with protein bS6.

In terms of biological role, binds as a heterodimer with protein bS6 to the central domain of the 16S rRNA, where it helps stabilize the platform of the 30S subunit. In Pseudothermotoga lettingae (strain ATCC BAA-301 / DSM 14385 / NBRC 107922 / TMO) (Thermotoga lettingae), this protein is Small ribosomal subunit protein bS18.